A 75-amino-acid polypeptide reads, in one-letter code: DNA-directed RNA polymerase subunit omega (75 aa).

Belongs to the RNA polymerase subunit omega family. As to quaternary structure, in cyanobacteria the RNAP catalytic core is composed of 2 alpha, 1 beta, 1 beta', 1 gamma and 1 omega subunit. When a sigma factor is associated with the core the holoenzyme is formed, which can initiate transcription.

The enzyme catalyses RNA(n) + a ribonucleoside 5'-triphosphate = RNA(n+1) + diphosphate. In terms of biological role, promotes RNA polymerase assembly. Latches the N- and C-terminal regions of the beta' subunit thereby facilitating its interaction with the beta and alpha subunits. In Gloeothece citriformis (strain PCC 7424) (Cyanothece sp. (strain PCC 7424)), this protein is DNA-directed RNA polymerase subunit omega.